Consider the following 704-residue polypeptide: Elongation factor G (704 aa).

The tr-type G domain maps to 8–291 (DKVRNIGIMA…AVVDYLASPL (284 aa)). GTP is bound by residues 17-24 (AHIDAGKT), 90-94 (DTPGH), and 144-147 (NKMD).

It belongs to the TRAFAC class translation factor GTPase superfamily. Classic translation factor GTPase family. EF-G/EF-2 subfamily.

The protein localises to the cytoplasm. Functionally, catalyzes the GTP-dependent ribosomal translocation step during translation elongation. During this step, the ribosome changes from the pre-translocational (PRE) to the post-translocational (POST) state as the newly formed A-site-bound peptidyl-tRNA and P-site-bound deacylated tRNA move to the P and E sites, respectively. Catalyzes the coordinated movement of the two tRNA molecules, the mRNA and conformational changes in the ribosome. The protein is Elongation factor G of Chlorobium phaeovibrioides (strain DSM 265 / 1930) (Prosthecochloris vibrioformis (strain DSM 265)).